We begin with the raw amino-acid sequence, 496 residues long: Lysine--tRNA ligase (496 aa).

Residues Glu409 and Glu416 each contribute to the Mg(2+) site.

Belongs to the class-II aminoacyl-tRNA synthetase family. As to quaternary structure, homodimer. It depends on Mg(2+) as a cofactor.

The protein resides in the cytoplasm. The enzyme catalyses tRNA(Lys) + L-lysine + ATP = L-lysyl-tRNA(Lys) + AMP + diphosphate. The sequence is that of Lysine--tRNA ligase from Streptococcus pneumoniae serotype 4 (strain ATCC BAA-334 / TIGR4).